Here is a 329-residue protein sequence, read N- to C-terminus: Quinone oxidoreductase (329 aa).

Residue alanine 2 is modified to N-acetylalanine. At lysine 23 the chain carries N6-acetyllysine. Residues tyrosine 53, 158–161, glycine 181, histidine 200, asparagine 229, 246–249, and 269–271 each bind NADP(+); these read SGGV, VGSR, and VTL. Serine 248 carries the post-translational modification Phosphoserine. At lysine 296 the chain carries N6-succinyllysine.

Belongs to the zinc-containing alcohol dehydrogenase family. Quinone oxidoreductase subfamily. In terms of assembly, homotetramer. In terms of tissue distribution, only very low amounts in the lens.

The protein localises to the cytoplasm. The catalysed reaction is 2 a quinone + NADPH + H(+) = 2 a 1,4-benzosemiquinone + NADP(+). Does not have alcohol dehydrogenase activity. Binds NADP and acts through a one-electron transfer process. Orthoquinones, such as 1,2-naphthoquinone or 9,10-phenanthrenequinone, are the best substrates (in vitro). May act in the detoxification of xenobiotics. Interacts with (AU)-rich elements (ARE) in the 3'-UTR of target mRNA species. Enhances the stability of mRNA coding for BCL2. NADPH binding interferes with mRNA binding. This Homo sapiens (Human) protein is Quinone oxidoreductase (CRYZ).